Here is a 349-residue protein sequence, read N- to C-terminus: Protein FAM98C (349 aa).

The disordered stretch occupies residues 313–349; that stretch reads PDRGGRPNELEPPMPTWRSRREDGGPQCWGRKKKKKK.

The protein belongs to the FAM98 family.

The sequence is that of Protein FAM98C (FAM98C) from Homo sapiens (Human).